We begin with the raw amino-acid sequence, 31 residues long: Cyclotide cter-E (31 aa).

The segment at residues 1–31 is a cross-link (cyclopeptide (Gly-Asp)); it reads GIPCAESCVWIPCTVTALLGCSCKDKVCYLD. 3 cysteine pairs are disulfide-bonded: cysteine 4–cysteine 21, cysteine 8–cysteine 23, and cysteine 13–cysteine 28.

Contains 3 disulfide bonds. Post-translationally, this is a cyclic peptide.

In terms of biological role, probably participates in a plant defense mechanism. The chain is Cyclotide cter-E from Clitoria ternatea (Butterfly pea).